Consider the following 338-residue polypeptide: Ketol-acid reductoisomerase (NADP(+)) (338 aa).

A KARI N-terminal Rossmann domain is found at 1 to 181 (MKVYYDKDCN…GGGRSGIIET (181 aa)). NADP(+) contacts are provided by residues 24–27 (YGSQ), Arg47, Ser50, Ser52, and 82–85 (DETQ). Residue His107 is part of the active site. Gly133 serves as a coordination point for NADP(+). The region spanning 182 to 327 (NFREETETDL…ARLRAMMPWI (146 aa)) is the KARI C-terminal knotted domain. The Mg(2+) site is built by Asp190, Glu194, Glu226, and Glu230. A substrate-binding site is contributed by Ser251.

This sequence belongs to the ketol-acid reductoisomerase family. It depends on Mg(2+) as a cofactor.

It catalyses the reaction (2R)-2,3-dihydroxy-3-methylbutanoate + NADP(+) = (2S)-2-acetolactate + NADPH + H(+). The catalysed reaction is (2R,3R)-2,3-dihydroxy-3-methylpentanoate + NADP(+) = (S)-2-ethyl-2-hydroxy-3-oxobutanoate + NADPH + H(+). The protein operates within amino-acid biosynthesis; L-isoleucine biosynthesis; L-isoleucine from 2-oxobutanoate: step 2/4. Its pathway is amino-acid biosynthesis; L-valine biosynthesis; L-valine from pyruvate: step 2/4. Functionally, involved in the biosynthesis of branched-chain amino acids (BCAA). Catalyzes an alkyl-migration followed by a ketol-acid reduction of (S)-2-acetolactate (S2AL) to yield (R)-2,3-dihydroxy-isovalerate. In the isomerase reaction, S2AL is rearranged via a Mg-dependent methyl migration to produce 3-hydroxy-3-methyl-2-ketobutyrate (HMKB). In the reductase reaction, this 2-ketoacid undergoes a metal-dependent reduction by NADPH to yield (R)-2,3-dihydroxy-isovalerate. This is Ketol-acid reductoisomerase (NADP(+)) from Pelobacter propionicus (strain DSM 2379 / NBRC 103807 / OttBd1).